The primary structure comprises 117 residues: UPF0342 protein BLi01058/BL02870 (117 aa).

Belongs to the UPF0342 family.

The polypeptide is UPF0342 protein BLi01058/BL02870 (Bacillus licheniformis (strain ATCC 14580 / DSM 13 / JCM 2505 / CCUG 7422 / NBRC 12200 / NCIMB 9375 / NCTC 10341 / NRRL NRS-1264 / Gibson 46)).